Here is a 548-residue protein sequence, read N- to C-terminus: Telomerase Cajal body protein 1 (548 aa).

Residues 1 to 142 (MKTLETQPLA…SGEPAAEDEG (142 aa)) form a disordered region. Low complexity predominate over residues 15–31 (PSDQDPAPAHPSPHASP). Phosphoserine occurs at positions 26, 30, and 54. Residue Ser64 is modified to Phosphoserine; by ATM. Ser85, Ser90, Ser112, and Ser114 each carry phosphoserine. WD repeat units lie at residues 167-206 (QPEN…YHEG), 222-267 (EGDT…LRAS), 272-313 (NHLD…RDCE), 323-364 (GQSG…ALLG), 365-405 (GHQG…YPLW), and 411-450 (VTTN…NDGK). Thr489 carries the post-translational modification Phosphothreonine. Position 491 is a phosphoserine (Ser491). The tract at residues 526-548 (SIPDDHQGEKGQGGTEGGVGELI) is disordered. Positions 535 to 548 (KGQGGTEGGVGELI) are enriched in gly residues.

It belongs to the TCAB1 family. As to quaternary structure, component of the telomerase holoenzyme complex composed of one molecule of TERT, one molecule of WRAP53/TCAB1, two molecules of H/ACA ribonucleoprotein complex subunits DKC1, NOP10, NHP2 and GAR1, and a telomerase RNA template component (TERC). The telomerase holoenzyme complex is associated with TEP1, SMG6/EST1A and POT1. Interacts with the chaperonin-containing T-complex (TRiC) complex; which mediates the folding of WRAP53/TCAB1. Interacts with COIL. Interacts with SMN1. Interacts with RNF8. Interacts with histone H2AX. In terms of processing, phosphorylated at Ser-64 by ATM in response to DNA damage, promoting its interaction with histone H2AX and localization to sites of DNA double-strand breaks. As to expression, expressed in all tissues and cell lines examined.

It is found in the nucleus. Its subcellular location is the cajal body. The protein resides in the chromosome. The protein localises to the telomere. RNA chaperone that plays a key role in telomere maintenance and RNA localization to Cajal bodies. Specifically recognizes and binds the Cajal body box (CAB box) present in both small Cajal body RNAs (scaRNAs) and telomerase RNA template component (TERC). Essential component of the telomerase holoenzyme complex, a ribonucleoprotein complex essential for the replication of chromosome termini that elongates telomeres in most eukaryotes. In the telomerase holoenzyme complex, required to stimulate the catalytic activity of the complex. Acts by specifically binding the CAB box of the TERC RNA and controlling the folding of the CR4/CR5 region of the TERC RNA, a critical step for telomerase activity. In addition, also controls telomerase holoenzyme complex localization to Cajal body. During S phase, required for delivery of TERC to telomeres during S phase and for telomerase activity. In addition to its role in telomere maintenance, also required for Cajal body formation, probably by mediating localization of scaRNAs to Cajal bodies. Also plays a role in DNA repair: phosphorylated by ATM in response to DNA damage and relocalizes to sites of DNA double-strand breaks to promote the repair of DNA double-strand breaks. Acts by recruiting the ubiquitin ligase RNF8 to DNA breaks and promote both homologous recombination (HR) and non-homologous end joining (NHEJ). The protein is Telomerase Cajal body protein 1 of Homo sapiens (Human).